Reading from the N-terminus, the 399-residue chain is Chorismate synthase (399 aa).

NADP(+) is bound by residues Arg-40 and Arg-46. FMN contacts are provided by residues 135–137, 256–257, Gly-301, 316–320, and Arg-342; these read RAS, QA, and KPIAT.

The protein belongs to the chorismate synthase family. In terms of assembly, homotetramer. FMNH2 is required as a cofactor.

It catalyses the reaction 5-O-(1-carboxyvinyl)-3-phosphoshikimate = chorismate + phosphate. Its pathway is metabolic intermediate biosynthesis; chorismate biosynthesis; chorismate from D-erythrose 4-phosphate and phosphoenolpyruvate: step 7/7. In terms of biological role, catalyzes the anti-1,4-elimination of the C-3 phosphate and the C-6 proR hydrogen from 5-enolpyruvylshikimate-3-phosphate (EPSP) to yield chorismate, which is the branch point compound that serves as the starting substrate for the three terminal pathways of aromatic amino acid biosynthesis. This reaction introduces a second double bond into the aromatic ring system. In Paenarthrobacter aurescens (strain TC1), this protein is Chorismate synthase.